The chain runs to 149 residues: Oligosaccharyltransferase complex subunit ostc-A (149 aa).

Residues methionine 1–threonine 32 lie on the Cytoplasmic side of the membrane. The chain crosses the membrane as a helical span at residues valine 33–isoleucine 53. Residues valine 54–tyrosine 83 lie on the Extracellular side of the membrane. Residues isoleucine 84–leucine 104 traverse the membrane as a helical segment. Residues aspartate 105–arginine 117 are Cytoplasmic-facing. A helical membrane pass occupies residues phenylalanine 118–phenylalanine 138. At methionine 139–glycine 149 the chain is on the extracellular side.

The protein belongs to the OSTC family. As to quaternary structure, specific component of the STT3A-containing form of the oligosaccharyltransferase (OST) complex.

It localises to the membrane. The protein operates within protein modification; protein glycosylation. In terms of biological role, specific component of the STT3A-containing form of the oligosaccharyl transferase (OST) complex that catalyzes the initial transfer of a defined glycan (Glc(3)Man(9)GlcNAc(2) in eukaryotes) from the lipid carrier dolichol-pyrophosphate to an asparagine residue within an Asn-X-Ser/Thr consensus motif in nascent polypeptide chains, the first step in protein N-glycosylation. N-glycosylation occurs cotranslationally and the complex associates with the Sec61 complex at the channel-forming translocon complex that mediates protein translocation across the endoplasmic reticulum (ER). All subunits are required for a maximal enzyme activity. In Xenopus laevis (African clawed frog), this protein is Oligosaccharyltransferase complex subunit ostc-A.